The chain runs to 419 residues: Serine--tRNA ligase (419 aa).

226–228 (TSE) lines the L-serine pocket. ATP-binding positions include 257–259 (RRE) and V273. E280 is an L-serine binding site. 344 to 347 (ELTS) provides a ligand contact to ATP. T379 is a binding site for L-serine.

This sequence belongs to the class-II aminoacyl-tRNA synthetase family. Type-1 seryl-tRNA synthetase subfamily. In terms of assembly, homodimer. The tRNA molecule binds across the dimer.

The protein localises to the cytoplasm. It carries out the reaction tRNA(Ser) + L-serine + ATP = L-seryl-tRNA(Ser) + AMP + diphosphate + H(+). It catalyses the reaction tRNA(Sec) + L-serine + ATP = L-seryl-tRNA(Sec) + AMP + diphosphate + H(+). Its pathway is aminoacyl-tRNA biosynthesis; selenocysteinyl-tRNA(Sec) biosynthesis; L-seryl-tRNA(Sec) from L-serine and tRNA(Sec): step 1/1. Catalyzes the attachment of serine to tRNA(Ser). Is also able to aminoacylate tRNA(Sec) with serine, to form the misacylated tRNA L-seryl-tRNA(Sec), which will be further converted into selenocysteinyl-tRNA(Sec). The polypeptide is Serine--tRNA ligase (Corynebacterium diphtheriae (strain ATCC 700971 / NCTC 13129 / Biotype gravis)).